A 392-amino-acid polypeptide reads, in one-letter code: Succinate--CoA ligase [ADP-forming] subunit beta (392 aa).

The ATP-grasp domain occupies 9 to 236 (RDLFERHGLP…QAAVDPLEQA (228 aa)). ATP contacts are provided by residues Lys45, 52 to 54 (GRG), Ala94, and Glu99. Mg(2+) is bound by residues Asn191 and Asp205. Substrate contacts are provided by residues Asn256 and 318-320 (GIT).

The protein belongs to the succinate/malate CoA ligase beta subunit family. As to quaternary structure, heterotetramer of two alpha and two beta subunits. Mg(2+) is required as a cofactor.

It catalyses the reaction succinate + ATP + CoA = succinyl-CoA + ADP + phosphate. It carries out the reaction GTP + succinate + CoA = succinyl-CoA + GDP + phosphate. It functions in the pathway carbohydrate metabolism; tricarboxylic acid cycle; succinate from succinyl-CoA (ligase route): step 1/1. Functionally, succinyl-CoA synthetase functions in the citric acid cycle (TCA), coupling the hydrolysis of succinyl-CoA to the synthesis of either ATP or GTP and thus represents the only step of substrate-level phosphorylation in the TCA. The beta subunit provides nucleotide specificity of the enzyme and binds the substrate succinate, while the binding sites for coenzyme A and phosphate are found in the alpha subunit. The chain is Succinate--CoA ligase [ADP-forming] subunit beta from Salinispora arenicola (strain CNS-205).